Consider the following 381-residue polypeptide: L-lactate dehydrogenase (381 aa).

Residues 1-380 form the FMN hydroxy acid dehydrogenase domain; it reads MIISASTDYR…TRDSLVRELG (380 aa). Substrate is bound at residue Tyr24. FMN is bound by residues Ser106 and Gln127. Residue Tyr129 participates in substrate binding. Thr155 is a binding site for FMN. Arg164 serves as a coordination point for substrate. Lys251 is a binding site for FMN. The active-site Proton acceptor is the His275. Arg278 is a binding site for substrate. 306–330 lines the FMN pocket; it reads DSGIRSGLDVVRMIALGADTVLIGR.

The protein belongs to the FMN-dependent alpha-hydroxy acid dehydrogenase family. As to quaternary structure, homotetramer. The cofactor is FMN.

It is found in the cell inner membrane. It carries out the reaction (S)-lactate + A = pyruvate + AH2. Catalyzes the conversion of L-lactate to pyruvate. Is coupled to the respiratory chain. This Pseudomonas putida (strain GB-1) protein is L-lactate dehydrogenase.